The chain runs to 316 residues: N-acetylmuramic acid 6-phosphate etherase (316 aa).

The tract at residues 1 to 25 (MAVFDPDLQPSSDRGHLLTEQSNQR) is disordered. Positions 66–229 (VANRLRAGGR…STAVMVKLGK (164 aa)) constitute an SIS domain. The active-site Proton donor is the Glu94. Glu125 is an active-site residue.

This sequence belongs to the GCKR-like family. MurNAc-6-P etherase subfamily. As to quaternary structure, homodimer.

The catalysed reaction is N-acetyl-D-muramate 6-phosphate + H2O = N-acetyl-D-glucosamine 6-phosphate + (R)-lactate. The protein operates within amino-sugar metabolism; N-acetylmuramate degradation. Specifically catalyzes the cleavage of the D-lactyl ether substituent of MurNAc 6-phosphate, producing GlcNAc 6-phosphate and D-lactate. The protein is N-acetylmuramic acid 6-phosphate etherase of Synechococcus sp. (strain CC9605).